The sequence spans 265 residues: Deoxycytidine kinase 1 (265 aa).

Residue 30-38 participates in ATP binding; sequence GNIAAGKST. 3 residues coordinate substrate: glutamate 55, tyrosine 88, and glutamine 99. The active-site Proton acceptor is the glutamate 129. Arginine 130 and aspartate 135 together coordinate substrate. Position 190–194 (190–194) interacts with ATP; that stretch reads RVYTR. Residue glutamate 199 coordinates substrate. 242-244 is a binding site for ATP; the sequence is EDF.

It belongs to the DCK/DGK family. Homodimer.

Its subcellular location is the nucleus. The catalysed reaction is 2'-deoxycytidine + a ribonucleoside 5'-triphosphate = dCMP + a ribonucleoside 5'-diphosphate + H(+). It carries out the reaction 2'-deoxyguanosine + ATP = dGMP + ADP + H(+). It catalyses the reaction 2'-deoxyadenosine + ATP = dAMP + ADP + H(+). Phosphorylates the deoxyribonucleosides deoxyadenosine, deoxycytidine and deoxyguanosine with highest activity against deoxycytidine followed by deadenosine and deoxyguanosine. Shows only very minor activity against deoxyuridine and deoxythymidine. The sequence is that of Deoxycytidine kinase 1 from Xenopus laevis (African clawed frog).